We begin with the raw amino-acid sequence, 506 residues long: Peptidyl-prolyl cis-trans isomerase CYP59 (506 aa).

The 161-residue stretch at 1 to 161 folds into the PPIase cyclophilin-type domain; the sequence is MSVLIVTSLG…KNIRIKHTHI (161 aa). The RRM domain maps to 243–321; it reads NVLFVCKLNP…RRIHVDFSQS (79 aa). The segment at 341–357 adopts a CCHC-type zinc-finger fold; the sequence is GCFKCGSTDHIAKDCVG. Basic and acidic residues-rich tracts occupy residues 388–404 and 412–506; these read ETPK…EKIQ and GEGK…RRDR. Residues 388–506 form a disordered region; sequence ETPKHNSHER…REARHERRDR (119 aa).

This sequence belongs to the cyclophilin-type PPIase family. In terms of assembly, component of the BZR1 complex. Interacts with NRPB1 (via CTD domain), SCL28, SCL30, SCL30A, SCL33, SC35, SR30, SR34, RSZ21, RS2Z33, RS31 and RS40. In terms of tissue distribution, ubiquitous.

It localises to the nucleus. The enzyme catalyses [protein]-peptidylproline (omega=180) = [protein]-peptidylproline (omega=0). Its function is as follows. PPIases accelerate the folding of proteins. It catalyzes the cis-trans isomerization of proline imidic peptide bonds in oligopeptides. Influences somehow regulation of RNA pol II (CTD) phosphorylation. Binds RNA with preferences for GC-rich sequences. Probably involved in activities connecting transcription and pre-mRNA processing. Involved in brassinostroid response. This Arabidopsis thaliana (Mouse-ear cress) protein is Peptidyl-prolyl cis-trans isomerase CYP59 (CYP59).